We begin with the raw amino-acid sequence, 863 residues long: Protein translocase subunit SecA (863 aa).

Residues glutamine 88, 106 to 110 (GEGKT), and aspartate 507 each bind ATP. Residues 806 to 863 (KSHEQNEQFLSNTTESGVNENGEAQITKVPRNSPCPCGSGKKYKECHGKSGPKKGILA) form a disordered region. Positions 812–829 (EQFLSNTTESGVNENGEA) are enriched in polar residues. Positions 840, 842, 851, and 852 each coordinate Zn(2+).

The protein belongs to the SecA family. In terms of assembly, monomer and homodimer. Part of the essential Sec protein translocation apparatus which comprises SecA, SecYEG and auxiliary proteins SecDF-YajC and YidC. Requires Zn(2+) as cofactor.

It is found in the cell inner membrane. Its subcellular location is the cytoplasm. It carries out the reaction ATP + H2O + cellular proteinSide 1 = ADP + phosphate + cellular proteinSide 2.. Part of the Sec protein translocase complex. Interacts with the SecYEG preprotein conducting channel. Has a central role in coupling the hydrolysis of ATP to the transfer of proteins into and across the cell membrane, serving as an ATP-driven molecular motor driving the stepwise translocation of polypeptide chains across the membrane. This chain is Protein translocase subunit SecA, found in Campylobacter lari (strain RM2100 / D67 / ATCC BAA-1060).